The primary structure comprises 283 residues: Pseudokinase OPG198 (283 aa).

ATP is bound by residues M1 and K30. The region spanning 1–283 (MESFKYCFDN…DRLRRLFIQD (283 aa)) is the Protein kinase domain.

It belongs to the protein kinase superfamily. Ser/Thr protein kinase family. Poxviruses subfamily. Interacts with B1/VPK1. Interacts with host VRK1. Interacts with host VRK2.

The protein localises to the host nucleus. Its activity is regulated as follows. Both catalytically active kinases B1/VPK1 and host VRK2 repress B12 inhibitory activity in a B1/VPK1 deletion mutant strain. Pseudokinase that plays a role in viral DNA replication repression by activating the antiviral protein BANF1 and inhibiting the activity of host VRK1, a cellular modulator of BANF1. This Homo sapiens (Human) protein is Pseudokinase OPG198 (OPG198).